Reading from the N-terminus, the 467-residue chain is ATP-dependent protease ATPase subunit HslU (467 aa).

ATP contacts are provided by residues Val-22 and 64–69; that span reads GVGKTE. The disordered stretch occupies residues 149–192; that stretch reads QTNNPLESLFGGAIPNFGQNNEDEEEPPTEEIKTKRSEIKRQLE. The segment covering 178–192 has biased composition (basic and acidic residues); the sequence is EEIKTKRSEIKRQLE. Positions 280, 345, and 417 each coordinate ATP.

The protein belongs to the ClpX chaperone family. HslU subfamily. A double ring-shaped homohexamer of HslV is capped on each side by a ring-shaped HslU homohexamer. The assembly of the HslU/HslV complex is dependent on binding of ATP.

It localises to the cytoplasm. Functionally, ATPase subunit of a proteasome-like degradation complex; this subunit has chaperone activity. The binding of ATP and its subsequent hydrolysis by HslU are essential for unfolding of protein substrates subsequently hydrolyzed by HslV. HslU recognizes the N-terminal part of its protein substrates and unfolds these before they are guided to HslV for hydrolysis. This chain is ATP-dependent protease ATPase subunit HslU, found in Staphylococcus aureus (strain bovine RF122 / ET3-1).